Reading from the N-terminus, the 183-residue chain is Nucleoside triphosphate pyrophosphatase (183 aa).

Residue aspartate 71 is the Proton acceptor of the active site.

It belongs to the Maf family. A divalent metal cation is required as a cofactor.

The protein resides in the cytoplasm. It catalyses the reaction a ribonucleoside 5'-triphosphate + H2O = a ribonucleoside 5'-phosphate + diphosphate + H(+). The catalysed reaction is a 2'-deoxyribonucleoside 5'-triphosphate + H2O = a 2'-deoxyribonucleoside 5'-phosphate + diphosphate + H(+). In terms of biological role, nucleoside triphosphate pyrophosphatase. May have a dual role in cell division arrest and in preventing the incorporation of modified nucleotides into cellular nucleic acids. This Campylobacter jejuni subsp. jejuni serotype O:6 (strain 81116 / NCTC 11828) protein is Nucleoside triphosphate pyrophosphatase.